Consider the following 122-residue polypeptide: Large ribosomal subunit protein uL14 (122 aa).

It belongs to the universal ribosomal protein uL14 family. In terms of assembly, part of the 50S ribosomal subunit. Forms a cluster with proteins L3 and L19. In the 70S ribosome, L14 and L19 interact and together make contacts with the 16S rRNA in bridges B5 and B8.

Functionally, binds to 23S rRNA. Forms part of two intersubunit bridges in the 70S ribosome. This Alcanivorax borkumensis (strain ATCC 700651 / DSM 11573 / NCIMB 13689 / SK2) protein is Large ribosomal subunit protein uL14.